Here is a 358-residue protein sequence, read N- to C-terminus: Testis-specific serine/threonine-protein kinase 2 (358 aa).

The region spanning 12 to 272 is the Protein kinase domain; it reads YIVGINLGKG…IDEILSHSWL (261 aa). Residues 18 to 26 and Lys41 contribute to the ATP site; that span reads LGKGSYAKV. The active-site Proton acceptor is Asp136. 2 stretches are compositionally biased toward basic and acidic residues: residues 296-315 and 329-358; these read DCKL…DHKL and NEDR…KAST. A disordered region spans residues 296-358; sequence DCKLDTRPGS…SGAEVEKAST (63 aa).

The protein belongs to the protein kinase superfamily. CAMK Ser/Thr protein kinase family. In terms of assembly, interacts with TSSK1B. Interacts with HSP90; this interaction stabilizes TSSK2. It depends on Mg(2+) as a cofactor. Post-translationally, autophosphorylated. Ubiquitinated; HSP90 activity negatively regulates ubiquitination and degradation. As to expression, testis-specific. Expressed only in the spermatids postmeiotically at the final stages of cytodifferentiation in the seminiferous tubules (at protein level). Not detected in released sperms in the lumen of the seminiferous tubules. Also present in the epididymal sperm (at protein level).

It localises to the cytoplasm. The protein resides in the cytoskeleton. It is found in the microtubule organizing center. The protein localises to the centrosome. Its subcellular location is the centriole. It localises to the cytoplasmic vesicle. The protein resides in the secretory vesicle. It is found in the acrosome. It carries out the reaction L-seryl-[protein] + ATP = O-phospho-L-seryl-[protein] + ADP + H(+). The catalysed reaction is L-threonyl-[protein] + ATP = O-phospho-L-threonyl-[protein] + ADP + H(+). Its activity is regulated as follows. Activated by phosphorylation on Thr-174, potentially by autophosphorylation. In terms of biological role, testis-specific serine/threonine-protein kinase required during spermatid development. Phosphorylates 'Ser-281' of TSKS and SPAG16. Involved in the late stages of spermatogenesis, during the reconstruction of the cytoplasm. During spermatogenesis, required for the transformation of a ring-shaped structure around the base of the flagellum originating from the chromatoid body. This Mus musculus (Mouse) protein is Testis-specific serine/threonine-protein kinase 2 (Tssk2).